The chain runs to 258 residues: UPF0328 protein ECU07_0060 (258 aa).

It belongs to the UPF0328 family.

The polypeptide is UPF0328 protein ECU07_0060 (Encephalitozoon cuniculi (strain GB-M1) (Microsporidian parasite)).